A 154-amino-acid polypeptide reads, in one-letter code: Myoglobin (154 aa).

The Globin domain occupies 2 to 148 (GLSDGEWQLV…FRNDIAAKYK (147 aa)). S4 bears the Phosphoserine mark. Residue H65 participates in nitrite binding. O2 is bound at residue H65. At T68 the chain carries Phosphothreonine. A heme b-binding site is contributed by H94.

It belongs to the globin family. Monomeric.

It localises to the cytoplasm. It is found in the sarcoplasm. The enzyme catalyses Fe(III)-heme b-[protein] + nitric oxide + H2O = Fe(II)-heme b-[protein] + nitrite + 2 H(+). It catalyses the reaction H2O2 + AH2 = A + 2 H2O. Monomeric heme protein which primary function is to store oxygen and facilitate its diffusion within muscle tissues. Reversibly binds oxygen through a pentacoordinated heme iron and enables its timely and efficient release as needed during periods of heightened demand. Depending on the oxidative conditions of tissues and cells, and in addition to its ability to bind oxygen, it also has a nitrite reductase activity whereby it regulates the production of bioactive nitric oxide. Under stress conditions, like hypoxia and anoxia, it also protects cells against reactive oxygen species thanks to its pseudoperoxidase activity. This Meles meles (Eurasian badger) protein is Myoglobin (MB).